Here is a 210-residue protein sequence, read N- to C-terminus: Thymidylate kinase (210 aa).

10–17 contacts ATP; sequence GPEGAGKS.

The protein belongs to the thymidylate kinase family.

It catalyses the reaction dTMP + ATP = dTDP + ADP. Functionally, phosphorylation of dTMP to form dTDP in both de novo and salvage pathways of dTTP synthesis. The chain is Thymidylate kinase from Pseudomonas syringae pv. syringae (strain B728a).